A 534-amino-acid polypeptide reads, in one-letter code: Autophagic-related protein 16.2 (534 aa).

WD repeat units lie at residues 243–281 (THDGEVHDVEWMSDDTFATAGSDSKVQIWRVSPNKTDAS), 288–329 (GCLG…STFS), 330–368 (GHTDKVSSARLFQSHNVISGSADRTIKNWDISSIRCLKS), 371–411 (VGST…ATYS), 413–452 (ELGQKVSSLDISMDGLQVLASSRDDTLSLIDVRNYGIIHL), 459–498 (KTSCDSTRAIFSSTGEYVLAGSSNSSVFIWNTKTTKLEKV), and 504–534 (SDSAQIMSLAWNPSGRGLLACDRQKTCTLWR).

Belongs to the WD repeat tipD family. In terms of assembly, homodimer (via N-terminus). Most likely a component of a complex at least containing atg-5, lgg-3, atg-16.1 and/or atg-16.2. Interacts (via N-terminus) with atg-16.1 (via N-terminus). Interacts (via N-terminus) with atg-5. Interacts (via WD 5-6 repeats) with lgg-2; the interaction is direct. As to expression, expressed in neurons, pharyngeal muscles, body wall muscle cells and intestinal cells.

The protein localises to the cytoplasm. The protein resides in the cell membrane. Most likely a component of the atg-5-atg-12-atg-16.1/atg-16.2 complex, which is recruited to the preautophagosomal membrane and associates with lgg-2 to promote autophagosome formation. Plays a role in the recruitment of lipidated lgg-1 probably to the autophagosome membrane to promote autophagosome formation. Furthermore, association with atg-5 is required for the nucleation of lgg-1 positive autophagosomes. Although its role in autophagosome formation may be distinct to the role of atg-16.2, it functions in a partially redundant manner with atg-16.1 to regulate autophagic processes. In a daf-18/PTEN- and daf-16/FOXO-dependent manner, required for maintaining the numbers of germ stem cell progenitors in the gonad during the late phases of larval development. The polypeptide is Autophagic-related protein 16.2 (Caenorhabditis elegans).